We begin with the raw amino-acid sequence, 138 residues long: Basic phospholipase A2 vaspin B chain (138 aa).

An N-terminal signal peptide occupies residues 1–16; it reads MRILWIVAVCLIGVEG. 7 cysteine pairs are disulfide-bonded: cysteine 42–cysteine 131, cysteine 44–cysteine 60, cysteine 59–cysteine 111, cysteine 65–cysteine 138, cysteine 66–cysteine 104, cysteine 73–cysteine 97, and cysteine 91–cysteine 102. Ca(2+)-binding residues include tyrosine 43, glycine 45, and glycine 47. The active site involves histidine 63. Aspartate 64 contacts Ca(2+). Aspartate 105 is a catalytic residue.

The protein belongs to the phospholipase A2 family. Group II subfamily. D49 sub-subfamily. Heterodimer of a weakly toxic basic protein having phospholipase A2 activity (B chain (AC Q8JFG1)) and a non-toxic acidic protein functioning as its inhibitor (A chain). Ca(2+) is required as a cofactor. Expressed by the venom gland.

Its subcellular location is the secreted. The enzyme catalyses a 1,2-diacyl-sn-glycero-3-phosphocholine + H2O = a 1-acyl-sn-glycero-3-phosphocholine + a fatty acid + H(+). In terms of biological role, heterodimer: postsynaptic neurotoxin. Functionally, monomer: snake venom phospholipase A2 (PLA2) that shows postsynaptic neurotoxicity. PLA2 catalyzes the calcium-dependent hydrolysis of the 2-acyl groups in 3-sn-phosphoglycerides. The chain is Basic phospholipase A2 vaspin B chain from Vipera aspis aspis (Aspic viper).